Reading from the N-terminus, the 381-residue chain is Chaperone protein DnaJ 1 (381 aa).

One can recognise a J domain in the interval 4–68 (DYYGLLGVSR…EKRRIVDLGG (65 aa)). A CR-type zinc finger spans residues 132-214 (GVTKQVTVDT…CMGDGRVRAR (83 aa)). Zn(2+) is bound by residues Cys145, Cys148, Cys162, Cys165, Cys188, Cys191, Cys202, and Cys205. 4 CXXCXGXG motif repeats span residues 145–152 (CDRCHGKG), 162–169 (CDTCGGRG), 188–195 (CPTCRGVG), and 202–209 (CHQCMGDG).

Belongs to the DnaJ family. Homodimer. Zn(2+) is required as a cofactor.

The protein resides in the cytoplasm. Participates actively in the response to hyperosmotic and heat shock by preventing the aggregation of stress-denatured proteins and by disaggregating proteins, also in an autonomous, DnaK-independent fashion. Unfolded proteins bind initially to DnaJ; upon interaction with the DnaJ-bound protein, DnaK hydrolyzes its bound ATP, resulting in the formation of a stable complex. GrpE releases ADP from DnaK; ATP binding to DnaK triggers the release of the substrate protein, thus completing the reaction cycle. Several rounds of ATP-dependent interactions between DnaJ, DnaK and GrpE are required for fully efficient folding. Also involved, together with DnaK and GrpE, in the DNA replication of plasmids through activation of initiation proteins. The protein is Chaperone protein DnaJ 1 of Mycolicibacterium paratuberculosis (strain ATCC BAA-968 / K-10) (Mycobacterium paratuberculosis).